We begin with the raw amino-acid sequence, 178 residues long: Large ribosomal subunit protein uL6 (178 aa).

The protein belongs to the universal ribosomal protein uL6 family. In terms of assembly, part of the 50S ribosomal subunit.

Functionally, this protein binds to the 23S rRNA, and is important in its secondary structure. It is located near the subunit interface in the base of the L7/L12 stalk, and near the tRNA binding site of the peptidyltransferase center. The protein is Large ribosomal subunit protein uL6 of Corynebacterium glutamicum (strain R).